A 274-amino-acid chain; its full sequence is Oxidoreductase stcQ (274 aa).

Belongs to the avfA family.

It functions in the pathway mycotoxin biosynthesis; sterigmatocystin biosynthesis. In terms of biological role, oxidoreductase; part of the gene cluster that mediates the biosynthesis of sterigmatocystin (ST), a polyketide-derived furanocoumarin which is part of the most toxic and carcinogenic compounds among the known mycotoxins. The first step in the biosynthesis of sterigmatocystin is the production of hexanoate by the fatty acid synthase (FAS) units stcJ and stcK. The polyketide backbone is assembled by the non-reducing polyketide synthase stcA by condensation of the starter hexanoyl-CoA and 7 malonyl-CoA extender units followed by cyclization and release of norsolorinic acid. Norsolorinic acid is the first stable intermediate in the biosynthesis of sterigmatocystin and is converted into averantin (AVN) by the ketoreductase stcE which reduces the hexanoate ketone to an alcohol. Averantin is then oxidized into 5'-hydroxyaverantin (HAVN) by the cytochrome P450 monooxygenase stcF. 5'-hydroxyaverantin is further converted to 5'-oxyaverantin (OAVN) by the 5'-hydroxyaverantin dehydrogenase stcG. The next step is the conversion of OAVN into averufin (AVF) which is catalyzed by a yet to be identified enzyme. The cytochrome P450 monooxygenase stcB and the flavin-binding monooxygenase stcW are both required for the conversion of averufin to 1-hydroxyversicolorone. The esterase stcI probably catalyzes the formation of versiconal hemiacetal acetate from 1-hydroxyversicolorone. The oxydoreductase stcN then probably catalyzes the biosynthetic step from versiconal to versicolorin B (VERB). The next step is performed by the versicolorin B desaturase stcL to produce versicolorin A (VERA). The ketoreductase stcU and the cytochrome P450 monooxygenase stcS are involved in the conversion of versicolorin A to demethylsterigmatocystin. The Baeyer-Villiger oxidas stcQ and the reductase stcR might be involved in the biosynthetic step from versicolorin A to demethylsterigmatocystin. The final step in the biosynthesis of sterigmatocystin is the methylation of demethylsterigmatocystin catalyzed by the methyltransferase stcP. The sequence is that of Oxidoreductase stcQ from Emericella nidulans (strain FGSC A4 / ATCC 38163 / CBS 112.46 / NRRL 194 / M139) (Aspergillus nidulans).